The primary structure comprises 312 residues: Tetraacyldisaccharide 4'-kinase (312 aa).

60–67 (IAGGSGKT) provides a ligand contact to ATP.

The protein belongs to the LpxK family.

The enzyme catalyses a lipid A disaccharide + ATP = a lipid IVA + ADP + H(+). The protein operates within glycolipid biosynthesis; lipid IV(A) biosynthesis; lipid IV(A) from (3R)-3-hydroxytetradecanoyl-[acyl-carrier-protein] and UDP-N-acetyl-alpha-D-glucosamine: step 6/6. Transfers the gamma-phosphate of ATP to the 4'-position of a tetraacyldisaccharide 1-phosphate intermediate (termed DS-1-P) to form tetraacyldisaccharide 1,4'-bis-phosphate (lipid IVA). This chain is Tetraacyldisaccharide 4'-kinase, found in Helicobacter pylori (strain HPAG1).